The chain runs to 265 residues: Glutamate racemase (265 aa).

Substrate contacts are provided by residues 7–8 (DS) and 39–40 (YG). C70 functions as the Proton donor/acceptor in the catalytic mechanism. 71-72 (NT) lines the substrate pocket. C177 (proton donor/acceptor) is an active-site residue.

Belongs to the aspartate/glutamate racemases family.

The catalysed reaction is L-glutamate = D-glutamate. The protein operates within cell wall biogenesis; peptidoglycan biosynthesis. Functionally, provides the (R)-glutamate required for cell wall biosynthesis. The polypeptide is Glutamate racemase (Prochlorococcus marinus (strain NATL1A)).